The primary structure comprises 230 residues: Orotate phosphoribosyltransferase (230 aa).

5-phospho-alpha-D-ribose 1-diphosphate contacts are provided by residues arginine 107, lysine 108, lysine 111, histidine 113, and 133–141 (EDLTTAGGS). Threonine 137 is a binding site for orotate.

It belongs to the purine/pyrimidine phosphoribosyltransferase family. PyrE subfamily. As to quaternary structure, homodimer. It depends on Mg(2+) as a cofactor.

It catalyses the reaction orotidine 5'-phosphate + diphosphate = orotate + 5-phospho-alpha-D-ribose 1-diphosphate. It participates in pyrimidine metabolism; UMP biosynthesis via de novo pathway; UMP from orotate: step 1/2. Catalyzes the transfer of a ribosyl phosphate group from 5-phosphoribose 1-diphosphate to orotate, leading to the formation of orotidine monophosphate (OMP). The sequence is that of Orotate phosphoribosyltransferase from Allorhizobium ampelinum (strain ATCC BAA-846 / DSM 112012 / S4) (Agrobacterium vitis (strain S4)).